Consider the following 1261-residue polypeptide: Rho GTPase-activating protein 29 (1261 aa).

A phosphoserine mark is found at Ser171, Ser176, Ser179, and Ser190. Positions 192–462 (LELDNVLLKN…SAKLYDPGQE (271 aa)) constitute an F-BAR domain. Residues 296 to 418 (RKNEMEKQRK…EILAQLRTLV (123 aa)) adopt a coiled-coil conformation. Residues 481–501 (NVNKHLNSSQPSGFGPANSLE) form a disordered region. Ser499, Ser519, and Ser552 each carry phosphoserine. Residues 541 to 559 (SESTGGSSESRSLDSESIS) show a composition bias toward low complexity. Positions 541 to 600 (SESTGGSSESRSLDSESISPGDFHRKLPRTPSSGTMSSADDLDEREPPSPSETGPNSLGT) are disordered. The segment at 612-657 (THKFRKLRSPTKCRDCEGIVVFQGVECEECLLVCHRKCLENLVIIC) adopts a Phorbol-ester/DAG-type zinc-finger fold. Residues 671–886 (AEFTQVAKKE…FLITYSQKIF (216 aa)) form the Rho-GAP domain. Residues Ser913 and Ser949 each carry the phosphoserine modification. Residues 981–1011 (SASQKIEDGKTPKPLSLKSDRSTNNVERHTP) form a disordered region. Over residues 998–1010 (KSDRSTNNVERHT) the composition is skewed to basic and acidic residues. A phosphoserine mark is found at Ser1019, Ser1144, and Ser1146. Disordered stretches follow at residues 1117-1153 (HSIN…APVR) and 1178-1238 (GNEE…VNPM). Residues 1133–1144 (RSVREASERRSS) are compositionally biased toward basic and acidic residues. The segment at 1258–1261 (PQFV) is interaction with PTPN13/PTPL1.

As to quaternary structure, interacts with PTPN13/PTPL1. Interacts with RAP2A via its coiled coil domain. Interacts with RASIP1. Widely expressed. Highly expressed in skeletal muscle and heart. Expressed at intermediate level in placenta, liver and pancreas. Weakly expressed in brain, lung and kidney.

GTPase activator for the Rho-type GTPases by converting them to an inactive GDP-bound state. Has strong activity toward RHOA, and weaker activity toward RAC1 and CDC42. May act as a specific effector of RAP2A to regulate Rho. In concert with RASIP1, suppresses RhoA signaling and dampens ROCK and MYH9 activities in endothelial cells and plays an essential role in blood vessel tubulogenesis. This is Rho GTPase-activating protein 29 (ARHGAP29) from Homo sapiens (Human).